A 359-amino-acid polypeptide reads, in one-letter code: N6-succino-2-amino-2'-deoxyadenylate synthase (359 aa).

The active-site Proton acceptor is Ser-23. ATP-binding residues include Ser-23, Thr-24, Gly-25, Lys-26, and Gly-27. Ser-23 is a binding site for dGMP. Residue Ser-23 participates in Mg(2+) binding. Asn-49 is a dGMP binding site. ATP is bound by residues Gly-51, His-52, and Thr-53. Gly-51 lines the Mg(2+) pocket. 3 residues coordinate dGMP: Ser-131, Thr-132, and Arg-146. ATP is bound at residue Gln-190. Residue Thr-205 participates in dGMP binding. Thr-274 provides a ligand contact to Mg(2+). Thr-274, Val-275, and Arg-280 together coordinate L-aspartate. The ATP site is built by Asn-305 and Gln-308.

It belongs to the Caudovirales PurZ family. Mg(2+) is required as a cofactor.

The catalysed reaction is dGMP + L-aspartate + ATP = (2S)-2-amino-2'-deoxyadenylo-succinate + ADP + phosphate + 2 H(+). The protein operates within purine metabolism. Its function is as follows. Involved in the synthesis of the atypical nucleotide dZTP (2-amino-2'-deoxyadenosine-5'-triphosphate). Catalyzes the condensation of aspartate with deoxyguanylate into dSMP (N6-succino-2-amino-2'-deoxyadenylate), which undergoes defumarylation and phosphorylation respectively by host PurB and guanylate/nucleoside diphosphate kinases to give dZTP. dZTP is integrated into the viral genome instead of adenine by the viral DNA polymerase. This Z-base probably completely replaces adenosine and forms a triple bond to the opposite T-base. The resulting non-standard viral DNA is called Z-genome. The chemically modified DNA is probably harder for the host bacteria to digest with nucleases or restriction enzymes. The sequence is that of N6-succino-2-amino-2'-deoxyadenylate synthase from Cyanophage S-2L (Cyanobacteria phage S-2L).